Consider the following 759-residue polypeptide: Cullin-4A (759 aa).

Lysine 8 is covalently cross-linked (Glycyl lysine isopeptide (Lys-Gly) (interchain with G-Cter in SUMO2)). Serine 10 is modified (phosphoserine). A Glycyl lysine isopeptide (Lys-Gly) (interchain with G-Cter in ubiquitin) cross-link involves residue lysine 33. The Cullin neddylation domain maps to 691–751 (DRQYQIDAAI…RDYMERDKDN (61 aa)). Residue lysine 705 forms a Glycyl lysine isopeptide (Lys-Gly) (interchain with G-Cter in NEDD8) linkage.

This sequence belongs to the cullin family. As to quaternary structure, can self-associate. Component of multiple DCX (DDB1-CUL4-X-box) E3 ubiquitin-protein ligase complexes that seem to consist of DDB1, CUL4A or CUL4B, RBX1 and a variable substrate recognition component which seems to belong to a protein family described as DCAF (Ddb1- and Cul4-associated factor) or CDW (CUL4-DDB1-associated WD40-repeat) proteins. Component of the CSA complex (DCX(ERCC8) complex) containing ERCC8, RBX1, DDB1 and CUL4A; the CSA complex interacts with RNA polymerase II; upon UV irradiation it interacts with the COP9 signalosome and preferentially with the hyperphosphorylated form of RNA polymerase II. Component of the DCX(DET1-COP1) complex with the substrate recognition component DET1 and COP1. Component of the DCX(DDB2) complex with the substrate recognition component DDB2. Component of the DCX(DTL) complex with the putative substrate recognition component DTL. Component of DCX complexes part of the DesCEND (destruction via C-end degrons) pathway, which contain either TRPC4AP or DCAF12 as substrate-recognition component. Component of the DCX(AMBRA1) complex with the substrate recognition component AMBRA1. Interacts with DDB1, RBX1, RNF7, CDT1, TIP120A/CAND1, SKP2, CDKN1B, MDM2, TP53 and HOXA9. Interacts with DDB2; the interactions with DDB2 and CAND1 are mutually exclusive. Interacts with DCAF1, DTL, DDA1, DCAF6, DCAF4, DCAF16, DCAF17, DET1, WDTC1, DCAF5, DCAF11, WDR24A, COP1, PAFAH1B1, ERCC8, GRWD1, FBXW5, RBBP7, GNB2, WSB1, WSB2, NUP43, PWP1, FBXW8, ATG16L1, KATNB1, RBBP4, RBBP5, LRWD1 and DCAF8. May interact with WDR26, WDR51B, SNRNP40, WDR61, WDR76, WDR5. Interacts (when neddylated) with ARIH1; leading to activate the E3 ligase activity of ARIH1. The DDB1-CUL4A complex interacts with CRY1. Interacts (unneddylated form) with DCUN1D1, DCUN1D2, DCUN1D3, DCUN1D4 and DCUN1D5; these interactions promote the cullin neddylation. In terms of assembly, (Microbial infection) Interacts with Epstein-Barr virus BPLF1. In terms of processing, neddylated; required for activity of cullin-RING-based E3 ubiquitin-protein ligase complexes. Deneddylated via its interaction with the COP9 signalosome (CSN) complex. Post-translationally, (Microbial infection) Deneddylated by Epstein-Barr virus BPLF1 leading to a S-phase-like environment that is required for efficient replication of the viral genome.

It participates in protein modification; protein ubiquitination. Core component of multiple cullin-RING-based E3 ubiquitin-protein ligase complexes which mediate the ubiquitination of target proteins. As a scaffold protein may contribute to catalysis through positioning of the substrate and the ubiquitin-conjugating enzyme. The E3 ubiquitin-protein ligase activity of the complex is dependent on the neddylation of the cullin subunit and is inhibited by the association of the deneddylated cullin subunit with TIP120A/CAND1. The functional specificity of the E3 ubiquitin-protein ligase complex depends on the variable substrate recognition component. DCX(DET1-COP1) directs ubiquitination of JUN. DCX(DDB2) directs ubiquitination of XPC. DCX(DDB2) ubiquitinates histones H3-H4 and is required for efficient histone deposition during replication-coupled (H3.1) and replication-independent (H3.3) nucleosome assembly, probably by facilitating the transfer of H3 from ASF1A/ASF1B to other chaperones involved in histone deposition. DCX(DTL) plays a role in PCNA-dependent polyubiquitination of CDT1 and MDM2-dependent ubiquitination of p53/TP53 in response to radiation-induced DNA damage and during DNA replication. DCX(DTL) directs autoubiquitination of DTL. In association with DDB1 and SKP2 probably is involved in ubiquitination of CDKN1B/p27kip. Is involved in ubiquitination of HOXA9. The DDB1-CUL4A-DTL E3 ligase complex regulates the circadian clock function by mediating the ubiquitination and degradation of CRY1. The DCX(ERCC8) complex (also named CSA complex) plays a role in transcription-coupled repair (TCR). A number of DCX complexes (containing either TRPC4AP or DCAF12 as substrate-recognition component) are part of the DesCEND (destruction via C-end degrons) pathway, which recognizes a C-degron located at the extreme C terminus of target proteins, leading to their ubiquitination and degradation. The DCX(AMBRA1) complex is a master regulator of the transition from G1 to S cell phase by mediating ubiquitination of phosphorylated cyclin-D (CCND1, CCND2 and CCND3). The DCX(AMBRA1) complex also acts as a regulator of Cul5-RING (CRL5) E3 ubiquitin-protein ligase complexes by mediating ubiquitination and degradation of Elongin-C (ELOC) component of CRL5 complexes. With CUL4B, contributes to ribosome biogenesis. The sequence is that of Cullin-4A from Homo sapiens (Human).